The chain runs to 261 residues: 5'-nucleotidase SurE (261 aa).

The a divalent metal cation site is built by Asp12, Asp13, Ser43, and Asn100.

It belongs to the SurE nucleotidase family. A divalent metal cation serves as cofactor.

It localises to the cytoplasm. The catalysed reaction is a ribonucleoside 5'-phosphate + H2O = a ribonucleoside + phosphate. Functionally, nucleotidase that shows phosphatase activity on nucleoside 5'-monophosphates. This Protochlamydia amoebophila (strain UWE25) protein is 5'-nucleotidase SurE.